We begin with the raw amino-acid sequence, 493 residues long: Ribose import ATP-binding protein RbsA (493 aa).

ABC transporter domains follow at residues 5–241 (LKIS…VGRR) and 252–491 (EKGE…AAAI). 37–44 (GENGAGKS) is a binding site for ATP.

Belongs to the ABC transporter superfamily. Ribose importer (TC 3.A.1.2.1) family. The complex is composed of an ATP-binding protein (RbsA), two transmembrane proteins (RbsC) and a solute-binding protein (RbsB).

The protein resides in the cell inner membrane. The enzyme catalyses D-ribose(out) + ATP + H2O = D-ribose(in) + ADP + phosphate + H(+). Its function is as follows. Part of the ABC transporter complex RbsABC involved in ribose import. Responsible for energy coupling to the transport system. The protein is Ribose import ATP-binding protein RbsA of Haemophilus influenzae (strain ATCC 51907 / DSM 11121 / KW20 / Rd).